A 336-amino-acid chain; its full sequence is UPF0104 membrane protein MJ1595 (336 aa).

Transmembrane regions (helical) follow at residues 9–29 (STILLIISFLFILAIMAYIGL), 40–60 (NPEYVILAFILQILVSVILSA), 68–88 (ILGYSANFKNIFLLVLMGLFI), 127–147 (VLDTAIFLFFTLFVIGYFVVT), 154–174 (YLILSWIFLFSLTAIIIYLIA), 223–243 (WEVVVAIFLSVMRYIFDILKL), 245–265 (LLFLSLSYVVSVICVSAVYLI), 285–305 (VMILSFSAFNIPPSVAAAVTL), and 306–326 (LDRLVSYILPTILGYIAMLII).

It belongs to the UPF0104 family.

It localises to the cell membrane. The chain is UPF0104 membrane protein MJ1595 from Methanocaldococcus jannaschii (strain ATCC 43067 / DSM 2661 / JAL-1 / JCM 10045 / NBRC 100440) (Methanococcus jannaschii).